The sequence spans 232 residues: MDIKNLLNPIERPEVTSELTNNVVLTTLNDLYNWARLSSVWPLMYGTSCCFIEFAGLIGSRFDFDRFGLVPRASPRQADLIITAGTVTMKMAPALVTLYEQMPEPKYVIAMGACTITGGMFSTDSYTTVRGVDKLIPVDVYIPGCPPRPEAIFDAIVKLRKKMATEDVRDRYEQIRQTHRYHTTAHTLKAVPESLSSKYLESPTRQAPPPGLAAAMEMPLVLPEVVKQNEQV.

[4Fe-4S] cluster contacts are provided by cysteine 49, cysteine 50, cysteine 114, and cysteine 145.

This sequence belongs to the complex I 20 kDa subunit family. NDH-1 can be composed of about 15 different subunits; different subcomplexes with different compositions have been identified which probably have different functions. Requires [4Fe-4S] cluster as cofactor.

It localises to the cell inner membrane. It catalyses the reaction a plastoquinone + NADH + (n+1) H(+)(in) = a plastoquinol + NAD(+) + n H(+)(out). The enzyme catalyses a plastoquinone + NADPH + (n+1) H(+)(in) = a plastoquinol + NADP(+) + n H(+)(out). Its function is as follows. NDH-1 shuttles electrons from an unknown electron donor, via FMN and iron-sulfur (Fe-S) centers, to quinones in the respiratory and/or the photosynthetic chain. The immediate electron acceptor for the enzyme in this species is believed to be plastoquinone. Couples the redox reaction to proton translocation, and thus conserves the redox energy in a proton gradient. Cyanobacterial NDH-1 also plays a role in inorganic carbon-concentration. The chain is NAD(P)H-quinone oxidoreductase subunit K 1 from Gloeobacter violaceus (strain ATCC 29082 / PCC 7421).